The following is a 530-amino-acid chain: Seeligeriolysin (530 aa).

The first 25 residues, 1–25 (MKIFGLVIMSLLFVSLPITQQPEAR), serve as a signal peptide directing secretion. The tract at residues 36–55 (TISPAETPESPPATPKTPVE) is disordered. A run of 4 beta stranded transmembrane segments spans residues 215 to 228 (ESQL…AFKA), 235 to 244 (VNFEAISDGK), 313 to 322 (SNKVKTAFEA), and 330 to 342 (KGDV…IKNS). A Conserved undecapeptide motif is present at residues 484-494 (ECTGLFWEWWR). Positions 516–517 (TL) match the Cholesterol binding motif.

The protein belongs to the cholesterol-dependent cytolysin family. In terms of assembly, homooligomeric pore complex of 35 to 50 subunits; when inserted in the host membrane.

It is found in the secreted. The protein localises to the host cell membrane. A cholesterol-dependent toxin that causes cytolysis by forming pores in cholesterol containing host membranes. L.seeligeri is non-pathogenic, perhaps in part because this protein is about 25% as toxic as listeriolysin O. Mutating a single residue in the undecapeptide increases toxicity 2-fold. After binding to target membranes, the protein undergoes a major conformation change, leading to its insertion in the host membrane and formation of an oligomeric pore complex. Cholesterol is required for binding to host membranes, membrane insertion and pore formation; cholesterol binding is mediated by a Thr-Leu pair in the C-terminus. Can be reversibly inactivated by oxidation. The protein is Seeligeriolysin of Listeria seeligeri.